The chain runs to 461 residues: Putative cytochrome P450 132 (461 aa).

C409 provides a ligand contact to heme.

This sequence belongs to the cytochrome P450 family. Requires heme as cofactor.

The chain is Putative cytochrome P450 132 (cyp132) from Mycobacterium bovis (strain ATCC BAA-935 / AF2122/97).